The primary structure comprises 1067 residues: Carbamoyl phosphate synthase large chain (1067 aa).

A carboxyphosphate synthetic domain region spans residues 1 to 401 (MPLNKDIKKV…AFLKGIRSLE (401 aa)). Residues Arg129, Arg169, Gly175, Gly176, Lys208, Val210, Glu215, Gly241, Ile242, His243, Gln284, and Glu298 each coordinate ATP. Residues 133-327 (RDMMNRINQP…IAKVAAKIAL (195 aa)) enclose the ATP-grasp 1 domain. Positions 284, 298, and 300 each coordinate Mg(2+). 3 residues coordinate Mn(2+): Gln284, Glu298, and Asn300. Positions 402-549 (IGKYSLEHKK…YSTYEQYDEV (148 aa)) are oligomerization domain. The carbamoyl phosphate synthetic domain stretch occupies residues 550 to 932 (VVSDNKKVVV…ALYKGFVGAS (383 aa)). Residues 674–864 (DDLLERLNIA…IVDIATRIML (191 aa)) enclose the ATP-grasp 2 domain. Arg710, Lys749, Leu751, Glu755, Gly780, Val781, His782, Ser783, Gln823, and Glu835 together coordinate ATP. Mg(2+) is bound by residues Gln823, Glu835, and Asn837. Residues Gln823, Glu835, and Asn837 each contribute to the Mn(2+) site. Residues 933-1067 (MYTGDKGKTI…NRELEVFNLI (135 aa)) enclose the MGS-like domain. The tract at residues 933-1067 (MYTGDKGKTI…NRELEVFNLI (135 aa)) is allosteric domain.

Belongs to the CarB family. Composed of two chains; the small (or glutamine) chain promotes the hydrolysis of glutamine to ammonia, which is used by the large (or ammonia) chain to synthesize carbamoyl phosphate. Tetramer of heterodimers (alpha,beta)4. Mg(2+) serves as cofactor. It depends on Mn(2+) as a cofactor.

It carries out the reaction hydrogencarbonate + L-glutamine + 2 ATP + H2O = carbamoyl phosphate + L-glutamate + 2 ADP + phosphate + 2 H(+). It catalyses the reaction hydrogencarbonate + NH4(+) + 2 ATP = carbamoyl phosphate + 2 ADP + phosphate + 2 H(+). It participates in amino-acid biosynthesis; L-arginine biosynthesis; carbamoyl phosphate from bicarbonate: step 1/1. The protein operates within pyrimidine metabolism; UMP biosynthesis via de novo pathway; (S)-dihydroorotate from bicarbonate: step 1/3. Functionally, large subunit of the glutamine-dependent carbamoyl phosphate synthetase (CPSase). CPSase catalyzes the formation of carbamoyl phosphate from the ammonia moiety of glutamine, carbonate, and phosphate donated by ATP, constituting the first step of 2 biosynthetic pathways, one leading to arginine and/or urea and the other to pyrimidine nucleotides. The large subunit (synthetase) binds the substrates ammonia (free or transferred from glutamine from the small subunit), hydrogencarbonate and ATP and carries out an ATP-coupled ligase reaction, activating hydrogencarbonate by forming carboxy phosphate which reacts with ammonia to form carbamoyl phosphate. The sequence is that of Carbamoyl phosphate synthase large chain from Clostridium perfringens (strain SM101 / Type A).